Reading from the N-terminus, the 442-residue chain is ATP-dependent protease ATPase subunit HslU (442 aa).

ATP contacts are provided by residues I18 and 60-65 (GVGKTE). A disordered region spans residues 136 to 157 (LPKPKNDWESTETDSSSNTRQV). Residues D255, E320, and R392 each contribute to the ATP site.

It belongs to the ClpX chaperone family. HslU subfamily. A double ring-shaped homohexamer of HslV is capped on each side by a ring-shaped HslU homohexamer. The assembly of the HslU/HslV complex is dependent on binding of ATP.

Its subcellular location is the cytoplasm. Its function is as follows. ATPase subunit of a proteasome-like degradation complex; this subunit has chaperone activity. The binding of ATP and its subsequent hydrolysis by HslU are essential for unfolding of protein substrates subsequently hydrolyzed by HslV. HslU recognizes the N-terminal part of its protein substrates and unfolds these before they are guided to HslV for hydrolysis. In Shewanella baltica (strain OS185), this protein is ATP-dependent protease ATPase subunit HslU.